The following is a 68-amino-acid chain: Molybdenum-pterin-binding protein 3 (68 aa).

The Mop domain maps to Ser-2–Ala-68.

Functionally, binds one mole of molybdenum per mole of protein and contains a pterin. In Clostridium pasteurianum, this protein is Molybdenum-pterin-binding protein 3 (mopIII).